We begin with the raw amino-acid sequence, 147 residues long: Hemoglobin subunit epsilon (147 aa).

The 145-residue stretch at 3–147 (HFTAEEKSTI…VATALAHKYH (145 aa)) folds into the Globin domain. Residues Ser-14 and Ser-51 each carry the phosphoserine modification. Heme b contacts are provided by His-64 and His-93.

This sequence belongs to the globin family. As to quaternary structure, heterotetramer of two alpha chains and two epsilon chains in early embryonic hemoglobin Gower-2; two zeta chains and two epsilon chains in early embryonic hemoglobin Gower-1. As to expression, red blood cells.

Functionally, the epsilon chain is a beta-type chain of early mammalian embryonic hemoglobin. This chain is Hemoglobin subunit epsilon (HBE1), found in Eulemur fulvus fulvus (Brown lemur).